The following is a 368-amino-acid chain: Phenylalanine--tRNA ligase alpha subunit (368 aa).

A Mg(2+)-binding site is contributed by Glu-268.

Belongs to the class-II aminoacyl-tRNA synthetase family. Phe-tRNA synthetase alpha subunit type 1 subfamily. As to quaternary structure, tetramer of two alpha and two beta subunits. It depends on Mg(2+) as a cofactor.

It is found in the cytoplasm. The catalysed reaction is tRNA(Phe) + L-phenylalanine + ATP = L-phenylalanyl-tRNA(Phe) + AMP + diphosphate + H(+). The chain is Phenylalanine--tRNA ligase alpha subunit from Nitrobacter hamburgensis (strain DSM 10229 / NCIMB 13809 / X14).